Consider the following 600-residue polypeptide: DDB1- and CUL4-associated factor 8-like protein 1 (600 aa).

The segment at 1-122 (MSHQEGSTGG…EEEQPRMCPR (122 aa)) is disordered. Acidic residues-rich tracts occupy residues 74 to 83 (SSSEDVELES) and 96 to 115 (EETE…EEEE). WD repeat units lie at residues 194–233 (SHAG…PVLN), 237–278 (GHDI…YCEN), 284–324 (KHRG…PASK), 332–372 (DKKV…KKEN), 388–427 (DFPT…GAQY), 435–475 (RNND…IIQF), and 479–518 (DRGD…ATEL). The tract at residues 562-600 (PGWRDHGAEFPDEEELDESSSTSDTSEEEGQDRVQCIPS) is disordered.

It belongs to the WD repeat DCAF8 family.

In Homo sapiens (Human), this protein is DDB1- and CUL4-associated factor 8-like protein 1 (DCAF8L1).